A 42-amino-acid chain; its full sequence is Photosystem I reaction center subunit IX (42 aa).

The chain crosses the membrane as a helical span at residues 7–27; that stretch reads YLSTAPVLATLWFGFLAGLLI.

This sequence belongs to the PsaJ family.

The protein resides in the plastid. It localises to the chloroplast thylakoid membrane. In terms of biological role, may help in the organization of the PsaE and PsaF subunits. The chain is Photosystem I reaction center subunit IX from Marchantia polymorpha (Common liverwort).